Reading from the N-terminus, the 1356-residue chain is DNA-directed RNA polymerase subunit beta (1356 aa).

The protein belongs to the RNA polymerase beta chain family. As to quaternary structure, the RNAP catalytic core consists of 2 alpha, 1 beta, 1 beta' and 1 omega subunit. When a sigma factor is associated with the core the holoenzyme is formed, which can initiate transcription.

The catalysed reaction is RNA(n) + a ribonucleoside 5'-triphosphate = RNA(n+1) + diphosphate. Functionally, DNA-dependent RNA polymerase catalyzes the transcription of DNA into RNA using the four ribonucleoside triphosphates as substrates. The chain is DNA-directed RNA polymerase subunit beta from Caulobacter vibrioides (strain ATCC 19089 / CIP 103742 / CB 15) (Caulobacter crescentus).